The sequence spans 243 residues: uncharacterized protein (243 aa).

A signal peptide spans Met1 to Ala19. Asn136 carries an N-linked (GlcNAc...) asparagine glycan.

The protein resides in the secreted. This is an uncharacterized protein from Homo sapiens (Human).